The primary structure comprises 479 residues: UDP-N-acetylmuramoyl-L-alanyl-D-glutamate--2,6-diaminopimelate ligase (479 aa).

Residue Ser-21 coordinates UDP-N-acetyl-alpha-D-muramoyl-L-alanyl-D-glutamate. Residue Gly-98–Ser-104 participates in ATP binding. UDP-N-acetyl-alpha-D-muramoyl-L-alanyl-D-glutamate-binding positions include Thr-144–Thr-145, Ser-171, Gln-177, and Arg-179. An N6-carboxylysine modification is found at Lys-211. Meso-2,6-diaminopimelate is bound by residues Arg-372, Asp-396–Arg-399, Gly-446, and Glu-450. Residues Asp-396–Arg-399 carry the Meso-diaminopimelate recognition motif motif.

Belongs to the MurCDEF family. MurE subfamily. Mg(2+) is required as a cofactor. Post-translationally, carboxylation is probably crucial for Mg(2+) binding and, consequently, for the gamma-phosphate positioning of ATP.

The protein resides in the cytoplasm. It catalyses the reaction UDP-N-acetyl-alpha-D-muramoyl-L-alanyl-D-glutamate + meso-2,6-diaminopimelate + ATP = UDP-N-acetyl-alpha-D-muramoyl-L-alanyl-gamma-D-glutamyl-meso-2,6-diaminopimelate + ADP + phosphate + H(+). The protein operates within cell wall biogenesis; peptidoglycan biosynthesis. Its function is as follows. Catalyzes the addition of meso-diaminopimelic acid to the nucleotide precursor UDP-N-acetylmuramoyl-L-alanyl-D-glutamate (UMAG) in the biosynthesis of bacterial cell-wall peptidoglycan. This Rickettsia conorii (strain ATCC VR-613 / Malish 7) protein is UDP-N-acetylmuramoyl-L-alanyl-D-glutamate--2,6-diaminopimelate ligase.